The sequence spans 329 residues: Quinone oxidoreductase (329 aa).

Alanine 2 carries the post-translational modification N-acetylalanine. Lysine 23 is subject to N6-acetyllysine. NADP(+)-binding positions include tyrosine 53, 158 to 161, glycine 181, histidine 200, asparagine 229, 246 to 249, and 269 to 271; these read SGGV, VGSR, and VTL. Serine 248 is modified (phosphoserine). Lysine 296 carries the N6-succinyllysine modification.

This sequence belongs to the zinc-containing alcohol dehydrogenase family. Quinone oxidoreductase subfamily. As to quaternary structure, homotetramer. In terms of tissue distribution, only very low amounts in the lens.

It is found in the cytoplasm. The enzyme catalyses 2 a quinone + NADPH + H(+) = 2 a 1,4-benzosemiquinone + NADP(+). Its function is as follows. Does not have alcohol dehydrogenase activity. Binds NADP and acts through a one-electron transfer process. Orthoquinones, such as 1,2-naphthoquinone or 9,10-phenanthrenequinone, are the best substrates (in vitro). May act in the detoxification of xenobiotics. Interacts with (AU)-rich elements (ARE) in the 3'-UTR of target mRNA species. Enhances the stability of mRNA coding for BCL2. NADPH binding interferes with mRNA binding. This is Quinone oxidoreductase (CRYZ) from Homo sapiens (Human).